The sequence spans 1101 residues: MNYYPEVKGNPEFSAIEKEILQYWNSEKIFEESVNTRSRDRSFVFYDGPPFANGLPHYGHLLTGFIKDAVARYKTMRGFRVERKFGWDCHGLPAEMLAEKELGVSGKVSIESFGIDKFNDYCRSSIMRFTQQWREYVERQGRWVDFENGYRTMDKSFMESVMWAFHELWHKGLVYESVKVVPYSWACQTPLSNFETKMDNAYREKVSKSVTVRFKLSEQVGFVPQGVESCSILAWTTTPWTLVSNFALAINTNMDYVGAVVGAEMLIFSAGYLDHFMRYCERHSLECAKVVQIPAKELLAVKYMPPFPYFADSKNAFMVLDAEFVAEGAGTGIVHLAPGFGEDDFLLCKQHGIPNLGEESRGMLSVICPIDDAGRFTAAVGDFAGQHVFDVVDAVIRQLKEKGLWFATEQCTHSYPHCWRTDTPLIYRATSSWYVEVTKLKARMVELNKEVNWVPEHVQSGQFGKWLDGAKDWSVSRHRFWGAPVPVWRSDDPKYPRTDVYGSIKKVLPDVKALEEDFGPVEDLHRPYIDNLVRPNPDDPTGKSMMRRVPDVLDCWFESGSMPYAQMHYPFENKEFFDSHFPADFITEYIAQTRGWFYTLFVLSTGLFDRHPFKNCICHGVVLDIKGQKLSKRLNNYPDPMEMFEKYGADSVRFTMLSHAVSIGGDLLLDQDGDVVRDTLKSVVKPIWNSYSFFTVYANSDQMQGRILESLEGITNIMDQYILYECACMVVKVLEAMESSSAGVRDPYNIRLACAAIVQFSDKLNNWYIRGCRGRFWMRDKTADKSDAYNTLYTVLYHLARTIAPFLPFIAESIWLGLSFQREKSVHLADFPDASSFSAVHQYKKNAEYMQLAMDVCSHVLSLRNAHNIRVRQPLRRMVVYPYNCESLLDMPQQYRDIILNEVNVKSLQIASTIGDMASFELKLNFALLGQRVPEKVKQIITLARAGVWEVQSDGSLLLGAPGCEQCVIQKDEFSLNLKVHSEYACQIISGGVPVGVLHIDHELTRELLLEGIARDVMRLIQQARKDCGLEMLDHAEVIINTDAAEIIEAISIWYDFIKQQTFSHTLEHRPAQAVVEDCSKYTKISGKDFDIFLCKSALCS.

The 'HIGH' region signature appears at 50–60 (PFANGLPHYGH). Residues 629-633 (KLSKR) carry the 'KMSKS' region motif. Lys-632 provides a ligand contact to ATP.

This sequence belongs to the class-I aminoacyl-tRNA synthetase family. IleS type 2 subfamily. As to quaternary structure, monomer. Zn(2+) serves as cofactor.

The protein resides in the cytoplasm. It carries out the reaction tRNA(Ile) + L-isoleucine + ATP = L-isoleucyl-tRNA(Ile) + AMP + diphosphate. In terms of biological role, catalyzes the attachment of isoleucine to tRNA(Ile). As IleRS can inadvertently accommodate and process structurally similar amino acids such as valine, to avoid such errors it has two additional distinct tRNA(Ile)-dependent editing activities. One activity is designated as 'pretransfer' editing and involves the hydrolysis of activated Val-AMP. The other activity is designated 'posttransfer' editing and involves deacylation of mischarged Val-tRNA(Ile). This Anaplasma marginale (strain St. Maries) protein is Isoleucine--tRNA ligase.